A 631-amino-acid chain; its full sequence is MERCDGVMFAARYDPEDGKRESVSEDTESERESESGSESESESEKETESESEKETESESESETGNTGKTGETRKSIGLESVSDSDSDSGSQSRSDSDVEMKEVDASNSNIVSDSSKHKSVLKKLRTSLSAQKAENSTSNSDSDESSVPTHDLAPLPQPALPRDQRLTATTNHIGNLDWLATPIYASTTETVPFSSFGLSSSMVKNLQSNGFSSAFSVQVSVLKLLLPDMESQAIRPDIGGDLLVNAATGSGKTLGYAIPIIESLRNRIVPRVRAIVLVPTKPLISQVKATFAMLSKNTNLSVVSLRSDISINDEAQRLQVVPDIIVSTPGRLVEHLTNGHINLKSLRYLVIDEADRLLNQSFQNWCETLMSRIDSNPISELDQTWRPSVQKLVFSATLTTDAGRLSMLKLQRPRLIIVNDRHELVNELFTVPATLQEYKLSLGSARSSAKPLVLAKFLMSEQKLVNTLVFAKSNEASLRLCRLLQLLFRVFGLDVTVSYLNSTNNAASTRAKILKDFANQTVHILVVTDLIARGIDIATITNVINYDLPNSSRDYVHRVGRTARANQDGEAYTMCFGKGETKWFTQLVREVSRQTEVKDVEKGFRDLVSREDEAKYDTCLEELQRQVFEGV.

Residues 1–161 (MERCDGVMFA…LAPLPQPALP (161 aa)) form a disordered region. Residues 13 to 23 (YDPEDGKRESV) show a composition bias toward basic and acidic residues. The segment covering 24-41 (SEDTESERESESGSESES) has biased composition (acidic residues). Residues 42-56 (ESEKETESESEKETE) are compositionally biased toward basic and acidic residues. Over residues 80–93 (SVSDSDSDSGSQSR) the composition is skewed to low complexity. Residues 94–104 (SDSDVEMKEVD) are compositionally biased toward basic and acidic residues. The short motif at 191–219 (VPFSSFGLSSSMVKNLQSNGFSSAFSVQV) is the Q motif element. The Helicase ATP-binding domain occupies 233–416 (AIRPDIGGDL…MLKLQRPRLI (184 aa)). 246-253 (AATGSGKT) contributes to the ATP binding site. A DEAD box motif is present at residues 352-355 (DEAD). Positions 459 to 608 (MSEQKLVNTL…DVEKGFRDLV (150 aa)) constitute a Helicase C-terminal domain.

It belongs to the DEAD box helicase family. DDX51/DBP6 subfamily. As to quaternary structure, associated with pre-ribosomal particles.

The protein localises to the nucleus. Its subcellular location is the nucleolus. The catalysed reaction is ATP + H2O = ADP + phosphate + H(+). Functionally, ATP-binding RNA helicase involved in the biogenesis of 60S ribosomal subunits and is required for the normal formation of 25S and 5.8S rRNAs. The chain is ATP-dependent RNA helicase DBP6 (DBP6) from Meyerozyma guilliermondii (strain ATCC 6260 / CBS 566 / DSM 6381 / JCM 1539 / NBRC 10279 / NRRL Y-324) (Yeast).